The chain runs to 664 residues: ATP synthase subunit alpha 2 (664 aa).

Residue 180 to 187 (GDRATGKT) participates in ATP binding. Residues 525–664 (MPAEDAAGDI…DAEAEARHKR (140 aa)) form a disordered region. Residues 543–588 (ARGDADRDADHGANREVSREVSPEASREVSREVSCEVSHEADRDAA) show a composition bias toward basic and acidic residues. Over residues 589–599 (ADAARVAGRAP) the composition is skewed to low complexity. The segment covering 621-639 (ADGDRASASRPRPDARGDA) has biased composition (basic and acidic residues).

Belongs to the ATPase alpha/beta chains family. As to quaternary structure, F-type ATPases have 2 components, CF(1) - the catalytic core - and CF(0) - the membrane proton channel. CF(1) has five subunits: alpha(3), beta(3), gamma(1), delta(1), epsilon(1). CF(0) has three main subunits: a(1), b(2) and c(9-12). The alpha and beta chains form an alternating ring which encloses part of the gamma chain. CF(1) is attached to CF(0) by a central stalk formed by the gamma and epsilon chains, while a peripheral stalk is formed by the delta and b chains.

It is found in the cell inner membrane. It catalyses the reaction ATP + H2O + 4 H(+)(in) = ADP + phosphate + 5 H(+)(out). Its function is as follows. Produces ATP from ADP in the presence of a proton gradient across the membrane. The alpha chain is a regulatory subunit. The protein is ATP synthase subunit alpha 2 of Burkholderia pseudomallei (strain 1710b).